A 243-amino-acid chain; its full sequence is 3-deoxy-manno-octulosonate cytidylyltransferase (243 aa).

This sequence belongs to the KdsB family.

It is found in the cytoplasm. The enzyme catalyses 3-deoxy-alpha-D-manno-oct-2-ulosonate + CTP = CMP-3-deoxy-beta-D-manno-octulosonate + diphosphate. The protein operates within nucleotide-sugar biosynthesis; CMP-3-deoxy-D-manno-octulosonate biosynthesis; CMP-3-deoxy-D-manno-octulosonate from 3-deoxy-D-manno-octulosonate and CTP: step 1/1. Its pathway is bacterial outer membrane biogenesis; lipopolysaccharide biosynthesis. Its function is as follows. Activates KDO (a required 8-carbon sugar) for incorporation into bacterial lipopolysaccharide in Gram-negative bacteria. The protein is 3-deoxy-manno-octulosonate cytidylyltransferase of Helicobacter pylori (strain G27).